The chain runs to 1206 residues: MGDGTEFVVRSDREDKKLAEDRISDEQVVKNELVRSDEVRDDNEDEVFEEAIGSENDEQEEEEDPKRELFESDDLPLVETLKSSMVEHEVEDFEEAVGDLDETSSNEGGVKDFTAVGESHGAGEAEFDVLATKMNGDKGEGGGGGSYDKVESSLDVVDTTENATSTNTNGSNLAAEHVGIENGKTHSFLGNGIASPKNKEVVAEVIPKDDGIEEPWNDGIEVDNWEERVDGIQTEQEVEEGEGTTENQFEKRTEEEVVEGEGTSKNLFEKQTEQDVVEGEGTSKDLFENGSVCMDSESEAERNGETGAAYTSNIVTNASGDNEVSSAVTSSPLEESSSGEKGETEGDSTCLKPEQHLASSPHSYPESTEVHSNSGSPGVTSREHKPVQSANGGHDVQSPQPNKELEKQQSSRVHVDPEITENSHVETEPEVVSSVSPTESRSNPAALPPARPAGLGRASPLLEPASRAPQQSRVNGNGSHNQFQQAEDSTTTEADEHDETREKLQLIRVKFLRLAHRLGQTPHNVVVAQVLYRLGLAEQLRGRNGSRVGAFSFDRASAMAEQLEAAGQDPLDFSCTIMVLGKSGVGKSATINSIFDEVKFCTDAFQMGTKRVQDVEGLVQGIKVRVIDTPGLLPSWSDQAKNEKILNSVKAFIKKNPPDIVLYLDRLDMQSRDSGDMPLLRTISDVFGPSIWFNAIVGLTHAASVPPDGPNGTASSYDMFVTQRSHVIQQAIRQAAGDMRLMNPVSLVENHSACRTNRAGQRVLPNGQVWKPHLLLLSFASKILAEANALLKLQDNIPGRPFAARSKAPPLPFLLSSLLQSRPQPKLPEQQYGDEEDEDDLEESSDSDEESEYDQLPPFKSLTKAQMATLSKSQKKQYLDEMEYREKLLMKKQMKEERKRRKMFKKFAAEIKDLPDGYSENVEEESGGPASVPVPMPDLSLPASFDSDNPTHRYRYLDSSNQWLVRPVLETHGWDHDIGYEGVNAERLFVVKEKIPISVSGQVTKDKKDANVQLEMASSVKHGEGKSTSLGFDMQTVGKELAYTLRSETRFNNFRRNKAAAGLSVTHLGDSVSAGLKVEDKFIASKWFRIVMSGGAMTSRGDFAYGGTLEAQLRDKDYPLGRFLTTLGLSVMDWHGDLAIGGNIQSQVPIGRSSNLIARANLNNRGAGQVSVRVNSSEQLQLAMVAIVPLFKKLLSYYYPQTQYGQ.

G2 carries the post-translational modification N-acetylglycine. Residues 13–33 (REDKKLAEDRISDEQVVKNEL) are a coiled coil. 2 disordered regions span residues 33 to 75 (LVRS…SDDL) and 97 to 119 (VGDL…VGES). Residues 39–49 (VRDDNEDEVFE) show a composition bias toward acidic residues. Position 195 is a phosphoserine (S195). The tract at residues 233-499 (QTEQEVEEGE…TTTEADEHDE (267 aa)) is disordered. Positions 309–324 (AYTSNIVTNASGDNEV) are enriched in polar residues. Residues 325-336 (SSAVTSSPLEES) show a composition bias toward low complexity. Phosphoserine is present on residues S337, S363, and S398. Positions 357–379 (LASSPHSYPESTEVHSNSGSPGV) are enriched in polar residues. Positions 403 to 427 (KELEKQQSSRVHVDPEITENSHVET) are enriched in basic and acidic residues. The span at 430–440 (EVVSSVSPTES) shows a compositional bias: low complexity. Polar residues predominate over residues 468 to 492 (APQQSRVNGNGSHNQFQQAEDSTTT). Positions 572–801 (DFSCTIMVLG…KLQDNIPGRP (230 aa)) constitute an AIG1-type G domain. The G1 stretch occupies residues 581 to 588 (GKSGVGKS). GTP contacts are provided by residues 584–589 (GVGKSA) and 603–608 (DAFQMG). Mg(2+) is bound at residue S588. A homodimerization region spans residues 603-606 (DAFQ). The G2 stretch occupies residues 607–611 (MGTKR). The segment at 628–631 (DTPG) is G3. The interval 666–671 (RLDMQS) is homodimerization. The G4 stretch occupies residues 700–703 (THAA). Residues H701 and 749–750 (EN) contribute to the GTP site. Positions 749 to 751 (ENH) are G5. Residues 824-862 (QPKLPEQQYGDEEDEDDLEESSDSDEESEYDQLPPFKSL) form a disordered region. Acidic residues predominate over residues 832-853 (YGDEEDEDDLEESSDSDEESEY). The chain crosses the membrane as a helical span at residues 1182–1199 (LAMVAIVPLFKKLLSYYY).

This sequence belongs to the TRAFAC class TrmE-Era-EngA-EngB-Septin-like GTPase superfamily. AIG1/Toc34/Toc159-like paraseptin GTPase family. TOC159 subfamily. Homodimer. Part of the TOC core complex that includes 1 protein for the specific recognition of transit peptides surrounded by a ring composed of four proteins forming translocation channels, and four to five GTP-binding proteins providing energy. This core complex can interact with components of the TIC complex to form a larger import complex. Chloroplastic protein precursor such as prSS (precursor of the RuBisCO small subunit) interacts with these complexes. The TOC complex contains a specific subset of polar lipids such as digalactosyldiacylglyceride (DGDG), phosphatidylcholine (PC) and phosphatidylglycerol (PG). It depends on Mg(2+) as a cofactor. Phosphorylated by KOC1. In terms of tissue distribution, expressed in seedlings, leaves, flowers, and roots.

It is found in the plastid. The protein localises to the chloroplast outer membrane. It localises to the cytoplasm. Its function is as follows. GTPase involved in protein precursor import into chloroplasts. Seems to recognize chloroplast-destined precursor proteins and regulate their presentation to the translocation channel through GTP hydrolysis. Probably specialized in the import of nuclear encoded non-photosynthetic preproteins from the cytoplasm to the chloroplast. This chain is Translocase of chloroplast 132, chloroplastic, found in Arabidopsis thaliana (Mouse-ear cress).